The sequence spans 113 residues: Guanylate cyclase activator 2B (113 aa).

The N-terminal stretch at 1 to 27 is a signal peptide; that stretch reads MASRAAAGLLLCGVALVFLVLLQGTQS. The propeptide occupies 28–97; sequence VYIQYQGFRV…SIFQALRTIA (70 aa). Intrachain disulfides connect C68–C81, C101–C109, and C104–C112.

Belongs to the guanylin family.

The protein localises to the secreted. In terms of biological role, endogenous activator of intestinal guanylate cyclase. It stimulates this enzyme through the same receptor binding region as the heat-stable enterotoxins. May be a potent physiological regulator of intestinal fluid and electrolyte transport. May be an autocrine/paracrine regulator of intestinal salt and water transport. The sequence is that of Guanylate cyclase activator 2B (GUCA2B) from Sus scrofa (Pig).